Reading from the N-terminus, the 212-residue chain is Protein GrpE (212 aa).

The segment at 1–69 is disordered; it reads MAEMSNNKTS…LESAKKEIES (69 aa). Residues 40 to 60 are compositionally biased toward low complexity; that stretch reads ETTQTESMETAETETSLQTEL.

This sequence belongs to the GrpE family. In terms of assembly, homodimer.

It is found in the cytoplasm. Participates actively in the response to hyperosmotic and heat shock by preventing the aggregation of stress-denatured proteins, in association with DnaK and GrpE. It is the nucleotide exchange factor for DnaK and may function as a thermosensor. Unfolded proteins bind initially to DnaJ; upon interaction with the DnaJ-bound protein, DnaK hydrolyzes its bound ATP, resulting in the formation of a stable complex. GrpE releases ADP from DnaK; ATP binding to DnaK triggers the release of the substrate protein, thus completing the reaction cycle. Several rounds of ATP-dependent interactions between DnaJ, DnaK and GrpE are required for fully efficient folding. This Leptospira interrogans serogroup Icterohaemorrhagiae serovar Lai (strain 56601) protein is Protein GrpE.